The sequence spans 567 residues: MGRGLLRGLWPLHIVLWTRIASTIPPHVQKSVNNDMIVTDNNGAVKFPQLCKFCDVRFSTCDNQKSCMSNCSITSICEKPQEVCVAVWRKNDENITLETVCHDPKLPYHDFILEDAASPKCIMKEKKKPGETFFMCSCSSDECNDNIIFSEEYNTSNPDLLLVIFQVTGISLLPPLGVAISVIIIFYCYRVNRQQKLSSTWETGKTRKLMEFSEHCAIILEDDRSDISSTCANNINHNTELLPIELDTLVGKGRFAEVYKAKLKQNTSEQFETVAVKIFPYEEYASWKTEKDIFSDINLKHENILQFLTAEERKTELGKQYWLITAFHAKGNLQEYLTRHVISWEDLRKLGSSLARGIAHLHSDHTPCGRPKMPIVHRDLKSSNILVKNDLTCCLCDFGLSLRLDPTLSVDDLANSGQVGTARYMAPEVLESRMNLENVESFKQTDVYSMALVLWEMTSRCNAVGEVKDYEPPFGSKVREHPCVESMKDNVLRDRGRPEIPSFWLNHQGIQMVCETLTECWDHDPEARLTAQCVAERFSELEHLDRLSGRSCSEEKIPEDGSLNTTK.

An N-terminal signal peptide occupies residues 1–22; the sequence is MGRGLLRGLWPLHIVLWTRIAS. The Extracellular segment spans residues 23-166; that stretch reads TIPPHVQKSV…NPDLLLVIFQ (144 aa). 6 disulfide bridges follow: C51–C84, C54–C71, C61–C67, C77–C101, C121–C136, and C138–C143. 2 N-linked (GlcNAc...) asparagine glycosylation sites follow: N70 and N94. N-linked (GlcNAc...) asparagine glycosylation is present at N154. The helical transmembrane segment at 167 to 187 threads the bilayer; sequence VTGISLLPPLGVAISVIIIFY. Topologically, residues 188-567 are cytoplasmic; that stretch reads CYRVNRQQKL…PEDGSLNTTK (380 aa). In terms of domain architecture, Protein kinase spans 244–544; sequence IELDTLVGKG…AERFSELEHL (301 aa). Residues 250-258 and K277 contribute to the ATP site; that span reads VGKGRFAEV. The active-site Proton acceptor is the D379. Phosphoserine is present on residues S409, S548, and S553. Residues 439 to 567 are sufficient for interaction with CLU; the sequence is VESFKQTDVY…PEDGSLNTTK (129 aa).

The protein belongs to the protein kinase superfamily. TKL Ser/Thr protein kinase family. TGFB receptor subfamily. In terms of assembly, homodimer. Heterohexamer; TGFB1, TGFB2 and TGFB3 homodimeric ligands assemble a functional receptor composed of two TGFBR1 and TGFBR2 heterodimers to form a ligand-receptor heterohexamer. The respective affinity of TGFRB1 and TGFRB2 for the ligands may modulate the kinetics of assembly of the receptor and may explain the different biological activities of TGFB1, TGFB2 and TGFB3. Component of a complex composed of TSC22D1 (via N-terminus), TGFBR1 and TGFBR2; the interaction between TSC22D1 and TGFBR1 is inhibited by SMAD7 and promoted by TGFB1. Interacts with DAXX. Interacts with DYNLT4. Interacts with ZFYVE9; ZFYVE9 recruits SMAD2 and SMAD3 to the TGF-beta receptor. Interacts with and is activated by SCUBE3; this interaction does not affect TGFB1-binding to TGFBR2. Interacts with VPS39; this interaction is independent of the receptor kinase activity and of the presence of TGF-beta. Interacts with CLU. As to quaternary structure, homodimer; disulfide-linked. Mg(2+) serves as cofactor. Mn(2+) is required as a cofactor. In terms of processing, phosphorylated on a Ser/Thr residue in the cytoplasmic domain.

The protein localises to the cell membrane. It localises to the membrane raft. Its subcellular location is the secreted. The catalysed reaction is L-threonyl-[receptor-protein] + ATP = O-phospho-L-threonyl-[receptor-protein] + ADP + H(+). The enzyme catalyses L-seryl-[receptor-protein] + ATP = O-phospho-L-seryl-[receptor-protein] + ADP + H(+). In terms of biological role, transmembrane serine/threonine kinase forming with the TGF-beta type I serine/threonine kinase receptor, TGFBR1, the non-promiscuous receptor for the TGF-beta cytokines TGFB1, TGFB2 and TGFB3. Transduces the TGFB1, TGFB2 and TGFB3 signal from the cell surface to the cytoplasm and thus regulates a plethora of physiological and pathological processes including cell cycle arrest in epithelial and hematopoietic cells, control of mesenchymal cell proliferation and differentiation, wound healing, extracellular matrix production, immunosuppression and carcinogenesis. The formation of the receptor complex composed of 2 TGFBR1 and 2 TGFBR2 molecules symmetrically bound to the cytokine dimer results in the phosphorylation and activation of TGFBR1 by the constitutively active TGFBR2. Activated TGFBR1 phosphorylates SMAD2 which dissociates from the receptor and interacts with SMAD4. The SMAD2-SMAD4 complex is subsequently translocated to the nucleus where it modulates the transcription of the TGF-beta-regulated genes. This constitutes the canonical SMAD-dependent TGF-beta signaling cascade. Also involved in non-canonical, SMAD-independent TGF-beta signaling pathways. Its function is as follows. Has transforming growth factor beta-activated receptor activity. Binds TGFB1, TGFB2 and TGFB3 in the picomolar affinity range without the participation of additional receptors. Blocks activation of SMAD2 and SMAD3 by TGFB1. The chain is TGF-beta receptor type-2 (TGFBR2) from Homo sapiens (Human).